Reading from the N-terminus, the 620-residue chain is Probable potassium transport system protein Kup (620 aa).

The next 12 helical transmembrane spans lie at 11–31, 51–71, 100–120, 138–158, 167–187, 202–222, 246–266, 288–308, 334–354, 364–384, 396–416, and 418–438; these read LAFL…LYAF, ILSL…LLLV, IAML…VITP, LAPY…AVQA, FFAP…AHAI, AVHF…LVVL, WFAL…AYLL, LILL…SGIF, GQIY…FVML, AAYG…LVLV, VVTI…STST, and LMEG…VMYI.

This sequence belongs to the HAK/KUP transporter (TC 2.A.72) family.

Its subcellular location is the cell inner membrane. The catalysed reaction is K(+)(in) + H(+)(in) = K(+)(out) + H(+)(out). Its function is as follows. Transport of potassium into the cell. Likely operates as a K(+):H(+) symporter. This Vibrio cholerae serotype O1 (strain ATCC 39315 / El Tor Inaba N16961) protein is Probable potassium transport system protein Kup.